A 384-amino-acid chain; its full sequence is Zinc metalloproteinase nas-12 (384 aa).

A signal peptide spans 1 to 25; the sequence is MLYIPQFSIYFCLGYLLLFCKISNA. In terms of domain architecture, Peptidase M12A spans 73-271; that stretch reads VSIKGSSMNR…EKLNRLGQCG (199 aa). 5 disulfides stabilise this stretch: Cys-116–Cys-270, Cys-137–Cys-156, Cys-287–Cys-325, Cys-296–Cys-318, and Cys-305–Cys-322. Zn(2+) is bound at residue His-164. Glu-165 is a catalytic residue. Zn(2+) is bound by residues His-168 and His-174. One can recognise a ShKT 1 domain in the interval 287–325; the sequence is CQDVATAVSCEGNRRRGMCKNPFYKQMMIKSCQKTCRLC. N-linked (GlcNAc...) asparagine glycosylation is present at Asn-340. Intrachain disulfides connect Cys-348–Cys-384, Cys-355–Cys-377, and Cys-364–Cys-381. Residues 348 to 384 enclose the ShKT 2 domain; it reads CEDKHPRCDIYSHNGFCTLPFYDDVRYQLCAKTCNLC.

The cofactor is Zn(2+). As to expression, expressed in pharyngeal glands.

It is found in the secreted. Functionally, metalloprotease. This is Zinc metalloproteinase nas-12 (nas-12) from Caenorhabditis elegans.